The chain runs to 193 residues: Xanthine phosphoribosyltransferase (193 aa).

Xanthine is bound by residues L20 and T27. 5-phospho-alpha-D-ribose 1-diphosphate is bound at residue 128–132 (ANGQA). K156 lines the xanthine pocket.

It belongs to the purine/pyrimidine phosphoribosyltransferase family. Xpt subfamily. As to quaternary structure, homodimer.

The protein resides in the cytoplasm. The catalysed reaction is XMP + diphosphate = xanthine + 5-phospho-alpha-D-ribose 1-diphosphate. Its pathway is purine metabolism; XMP biosynthesis via salvage pathway; XMP from xanthine: step 1/1. Functionally, converts the preformed base xanthine, a product of nucleic acid breakdown, to xanthosine 5'-monophosphate (XMP), so it can be reused for RNA or DNA synthesis. This Streptococcus pneumoniae serotype 4 (strain ATCC BAA-334 / TIGR4) protein is Xanthine phosphoribosyltransferase.